A 465-amino-acid polypeptide reads, in one-letter code: Gamma-aminobutyric acid receptor subunit rho-2 (465 aa).

The first 20 residues, 1 to 20 (MPYFMRLALFLFCLMALVES), serve as a signal peptide directing secretion. The Extracellular portion of the chain corresponds to 21–260 (RKPRRKRWTG…LYINFTLRRH (240 aa)). Arg105 contacts 4-aminobutanoate. Residue Asn120 is glycosylated (N-linked (GlcNAc...) asparagine). Residue Ser169 coordinates 4-aminobutanoate. Residues Cys178 and Cys192 are joined by a disulfide bond. Residue Glu197 participates in 4-aminobutanoate binding. Residue Asn254 is glycosylated (N-linked (GlcNAc...) asparagine). The helical transmembrane segment at 261-281 (IFFFLLQTYFPATLMVMLSWV) threads the bilayer. Residues 282–293 (SFWIDHRAVPAR) are Cytoplasmic-facing. A helical membrane pass occupies residues 294-314 (VSLGIMTVLTMSTIITGVNAS). The Extracellular portion of the chain corresponds to 315–325 (MPRVSYIRAVD). The chain crosses the membrane as a helical span at residues 326 to 346 (IYLWVSFVFVFLSVLEYAAVN). At 347–443 (YLTTVQEQKE…IFQNTHAIDK (97 aa)) the chain is on the cytoplasmic side. Residues 444–464 (YSRLIFPAFYIVFNLIYWSVF) traverse the membrane as a helical segment. A topological domain (extracellular) is located at residue Ser465.

The protein belongs to the ligand-gated ion channel (TC 1.A.9) family. Gamma-aminobutyric acid receptor (TC 1.A.9.5) subfamily. GABRR2 sub-subfamily. In terms of assembly, three rho subunits (rho-1/GBRR1, rho-2/GBRR2 and rho-3/GBRR3) coassemble either to form functional homopentamers or heteropentamers. Rho-2 is unable to form a functional homopentamer. Interacts with SQSTM1. In terms of tissue distribution, expressed in spinal cord and in cerebellum. Expressed in retina.

It is found in the postsynaptic cell membrane. It localises to the cell membrane. It catalyses the reaction chloride(in) = chloride(out). Its activity is regulated as follows. In contrast with rho-1 and rho-3 homopentamers, rho-2 GABAARs are not inhibited by picrotoxin. In terms of biological role, rho subunit of the pentameric ligand-gated chloride channels responsible for mediating the effects of gamma-aminobutyric acid (GABA), the major inhibitory neurotransmitter in the brain. Rho-containing GABA-gated chloride channels are a subclass of GABA(A) receptors (GABAARs) entirely composed of rho subunits, where GABA molecules bind at the rho intersubunit interfaces. When activated by GABA, rho-GABAARs selectively allow the flow of chloride anions across the cell membrane down their electrochemical gradient. Rho-2 GABAARs may contribute to the regulation of glial development in the cerebellum by controlling extrasynaptic transmission. Rho-2 GABAARs are also involved in neuronal tonic (extrasynaptic) and phasic (synaptic) transmission in the Purkinje neurons of the cerebellum. Rho-2 GABAARs expressed in retina may play a role in retinal neurotransmission. This is Gamma-aminobutyric acid receptor subunit rho-2 from Rattus norvegicus (Rat).